The primary structure comprises 261 residues: Hydroxyethylthiazole kinase (261 aa).

M40 contributes to the substrate binding site. ATP contacts are provided by K116 and T162. G189 provides a ligand contact to substrate.

Belongs to the Thz kinase family. Mg(2+) serves as cofactor.

It catalyses the reaction 5-(2-hydroxyethyl)-4-methylthiazole + ATP = 4-methyl-5-(2-phosphooxyethyl)-thiazole + ADP + H(+). It participates in cofactor biosynthesis; thiamine diphosphate biosynthesis; 4-methyl-5-(2-phosphoethyl)-thiazole from 5-(2-hydroxyethyl)-4-methylthiazole: step 1/1. Its function is as follows. Catalyzes the phosphorylation of the hydroxyl group of 4-methyl-5-beta-hydroxyethylthiazole (THZ). The polypeptide is Hydroxyethylthiazole kinase (Methanosarcina mazei (strain ATCC BAA-159 / DSM 3647 / Goe1 / Go1 / JCM 11833 / OCM 88) (Methanosarcina frisia)).